Here is a 210-residue protein sequence, read N- to C-terminus: Riboflavin kinase (210 aa).

Residues 1-81 (MECRERRLAA…DLLRYFNIAS (81 aa)) are H-T-H motif-like. The tract at residues 82–210 (IRLVGRVVSG…GDVVEVEVLL (129 aa)) is riboflavin kinase. Residue 91–96 (GLGEGA) coordinates CDP. Mg(2+) contacts are provided by Thr120 and Asn122. FMN contacts are provided by Thr177 and Glu185. 190–193 (VKLR) contributes to the CDP binding site.

Belongs to the archaeal riboflavin kinase family. Mg(2+) serves as cofactor.

It carries out the reaction riboflavin + CTP = CDP + FMN + H(+). Its pathway is cofactor biosynthesis; FMN biosynthesis; FMN from riboflavin (CTP route): step 1/1. Catalyzes the CTP-dependent phosphorylation of riboflavin (vitamin B2) to form flavin mononucleotide (FMN). In Pyrobaculum arsenaticum (strain DSM 13514 / JCM 11321 / PZ6), this protein is Riboflavin kinase (ribK).